The following is an 880-amino-acid chain: Chaperone protein ClpB 1 (880 aa).

The Clp R domain occupies proline 6 to serine 148. 2 repeat regions span residues phenylalanine 9–glutamine 74 and leucine 85–serine 148. The segment at glutamate 161 to glutamine 343 is NBD1. Glycine 208–threonine 215 is an ATP binding site. Positions proline 344–glycine 554 are linker. The stretch at isoleucine 394–serine 530 forms a coiled coil. The NBD2 stretch occupies residues glutamate 564–alanine 775. Glycine 614–threonine 621 is an ATP binding site. The tract at residues leucine 776–threonine 880 is C-terminal.

This sequence belongs to the ClpA/ClpB family. In terms of assembly, homohexamer. The oligomerization is ATP-dependent.

The protein localises to the cytoplasm. Functionally, part of a stress-induced multi-chaperone system, it is involved in the recovery of the cell from heat-induced damage, in cooperation with DnaK, DnaJ and GrpE. Acts before DnaK, in the processing of protein aggregates. Protein binding stimulates the ATPase activity; ATP hydrolysis unfolds the denatured protein aggregates, which probably helps expose new hydrophobic binding sites on the surface of ClpB-bound aggregates, contributing to the solubilization and refolding of denatured protein aggregates by DnaK. The chain is Chaperone protein ClpB 1 (clpB1) from Nostoc sp. (strain PCC 7120 / SAG 25.82 / UTEX 2576).